Reading from the N-terminus, the 110-residue chain is MGQNDLVKTLRMNYLFDFYQSLLTNKQRNYLELFYLEDYSLSEIADTFNVSRQAVYDNIRRTGDLVEDYEKKLELYQKFEQRREIYDEMKKHLSNPEQIQRYIQQLEDLE.

Belongs to the UPF0122 family.

Might take part in the signal recognition particle (SRP) pathway. This is inferred from the conservation of its genetic proximity to ftsY/ffh. May be a regulatory protein. The chain is UPF0122 protein SAR1212 from Staphylococcus aureus (strain MRSA252).